The following is a 480-amino-acid chain: MILKLYNTRTRDFSELTNFENVKVYACGPTVYNYAHIGNFRTYVFGDLLIKTLRFLGYKVNYAMNITDIGHLTGDLDDGEDKVAKTAREKGLTVYEISEFFTEAFFNDCRKLNIVYPDKVLVASKHIPIMIEVVKILEEKKITYFSNGNVYFDTSCFKSYGEMAGIDLIDKDMTLPRVDVDKFKRNKTDFVLWFTNSKFKDQEMKWDSPWGFGYPSWHLECAAMNLEYFKDTLDIHLGGVDHIGVHHINEIAIAECFLDNKWCDVFVHGEFLIMDYNKMSKSRGNFITVKDLEDQNFSPLDFRYLCLTSHYRNQLKFSLDNLQASKIARENLINKLSYFYESLDPVDLNTLNKDLKNFGFSVEKEYYDSFVEKISFDLNVAQGLALLWEIIKSENLSFVSKLRLAFIFDEIMSLNLREEILKNLQNHDVVIDENMKALIEERRIAKCEKNFKRADEIRDFFAKKGFVLVDTKEGTKVKRG.

Cys-27 lines the Zn(2+) pocket. The short motif at Pro-29–Asn-39 is the 'HIGH' region element. Zn(2+) is bound by residues Cys-221, His-246, and Glu-250. The short motif at Lys-278 to Ser-282 is the 'KMSKS' region element. Lys-281 contributes to the ATP binding site.

This sequence belongs to the class-I aminoacyl-tRNA synthetase family. Monomer. Requires Zn(2+) as cofactor.

Its subcellular location is the cytoplasm. It carries out the reaction tRNA(Cys) + L-cysteine + ATP = L-cysteinyl-tRNA(Cys) + AMP + diphosphate. The protein is Cysteine--tRNA ligase of Borreliella burgdorferi (strain ZS7) (Borrelia burgdorferi).